Reading from the N-terminus, the 199-residue chain is MYETYHSGWIECITGSMFSGKSEELIRRLRRGLYAKQKVVVFKPAIDDRYHKDKIVSHNGNAIEAINISTAAEILKHDLSEVDVIGIDEVQFFENGIVHIAEQLAEKGHRVITAGLDMDFRAQPFEPMPQLMAVSEDVTKLQAVCAVCGASSSRTQRLIDGNPAKIDDPVILVGANESYEPRCRAHHIVAPSNTEKEEM.

Residues 15–22 (GSMFSGKS) and 88–91 (DEVQ) each bind ATP. Glutamate 89 (proton acceptor) is an active-site residue. Zn(2+) contacts are provided by cysteine 145, cysteine 148, cysteine 183, and histidine 186.

It belongs to the thymidine kinase family. As to quaternary structure, homotetramer.

Its subcellular location is the cytoplasm. The enzyme catalyses thymidine + ATP = dTMP + ADP + H(+). The sequence is that of Thymidine kinase from Staphylococcus saprophyticus subsp. saprophyticus (strain ATCC 15305 / DSM 20229 / NCIMB 8711 / NCTC 7292 / S-41).